The primary structure comprises 263 residues: 4-hydroxy-2-oxo-heptane-1,7-dioate aldolase (263 aa).

The Proton acceptor role is filled by H45. Q147 is a binding site for substrate. E149 serves as a coordination point for a divalent metal cation. Positions 174 and 175 each coordinate substrate. An a divalent metal cation-binding site is contributed by D175.

The protein belongs to the HpcH/HpaI aldolase family. In terms of assembly, homohexamer; trimer of dimers. A divalent metal cation is required as a cofactor.

It catalyses the reaction 4-hydroxy-2-oxoheptanedioate = succinate semialdehyde + pyruvate. It functions in the pathway aromatic compound metabolism; 4-hydroxyphenylacetate degradation; pyruvate and succinate semialdehyde from 4-hydroxyphenylacetate: step 7/7. Functionally, catalyzes the reversible retro-aldol cleavage of 4-hydroxy-2-ketoheptane-1,7-dioate (HKHD) to pyruvate and succinic semialdehyde. The protein is 4-hydroxy-2-oxo-heptane-1,7-dioate aldolase of Salmonella choleraesuis (strain SC-B67).